We begin with the raw amino-acid sequence, 200 residues long: NADH-quinone oxidoreductase subunit C (200 aa).

This sequence belongs to the complex I 30 kDa subunit family. As to quaternary structure, NDH-1 is composed of 14 different subunits. Subunits NuoB, C, D, E, F, and G constitute the peripheral sector of the complex.

The protein localises to the cell inner membrane. The enzyme catalyses a quinone + NADH + 5 H(+)(in) = a quinol + NAD(+) + 4 H(+)(out). In terms of biological role, NDH-1 shuttles electrons from NADH, via FMN and iron-sulfur (Fe-S) centers, to quinones in the respiratory chain. The immediate electron acceptor for the enzyme in this species is believed to be ubiquinone. Couples the redox reaction to proton translocation (for every two electrons transferred, four hydrogen ions are translocated across the cytoplasmic membrane), and thus conserves the redox energy in a proton gradient. This Ralstonia nicotianae (strain ATCC BAA-1114 / GMI1000) (Ralstonia solanacearum) protein is NADH-quinone oxidoreductase subunit C.